We begin with the raw amino-acid sequence, 166 residues long: Vasopressin-neurophysin 2-copeptin (166 aa).

An N-terminal signal peptide occupies residues 1–19 (MPDATLPACFLSLLAFTSA). Cysteines 20 and 25 form a disulfide. Glycine amide is present on Gly28. Cystine bridges form between Cys41/Cys85, Cys44/Cys58, Cys52/Cys75, Cys59/Cys65, Cys92/Cys104, Cys98/Cys116, and Cys105/Cys110. Asn133 is a glycosylation site (N-linked (GlcNAc...) asparagine).

This sequence belongs to the vasopressin/oxytocin family. As to quaternary structure, interacts with vasopressin receptors V1bR/AVPR1B (Ki=85 pM), V1aR/AVPR1A (Ki=0.6 nM) and V2R/AVPR2 (Ki=4.9 nM). Interacts with oxytocin receptor (OXTR) (Ki=110 nM).

The protein localises to the secreted. In terms of biological role, neurophysin 2 specifically binds vasopressin. Vasopressin has a direct antidiuretic action on the kidney, it also causes vasoconstriction of the peripheral vessels. Acts by binding to vasopressin receptors (V1bR/AVPR1B, V1aR/AVPR1A, and V2R/AVPR2). In Bos taurus (Bovine), this protein is Vasopressin-neurophysin 2-copeptin (AVP).